Consider the following 342-residue polypeptide: Thymidylate synthase (342 aa).

Residues Arg31 and 156–157 (RR) contribute to the dUMP site. Cys176 (nucleophile) is an active-site residue. DUMP-binding positions include 196–199 (RSGD), Asn207, and 237–239 (HVY). Asp199 contacts (6R)-5,10-methylene-5,6,7,8-tetrahydrofolate. (6R)-5,10-methylene-5,6,7,8-tetrahydrofolate is bound at residue Ala341.

Belongs to the thymidylate synthase family. Bacterial-type ThyA subfamily. In terms of assembly, homodimer.

Its subcellular location is the cytoplasm. It carries out the reaction dUMP + (6R)-5,10-methylene-5,6,7,8-tetrahydrofolate = 7,8-dihydrofolate + dTMP. The protein operates within pyrimidine metabolism; dTTP biosynthesis. Its function is as follows. Catalyzes the reductive methylation of 2'-deoxyuridine-5'-monophosphate (dUMP) to 2'-deoxythymidine-5'-monophosphate (dTMP) while utilizing 5,10-methylenetetrahydrofolate (mTHF) as the methyl donor and reductant in the reaction, yielding dihydrofolate (DHF) as a by-product. This enzymatic reaction provides an intracellular de novo source of dTMP, an essential precursor for DNA biosynthesis. In Haloferax volcanii (Halobacterium volcanii), this protein is Thymidylate synthase.